Reading from the N-terminus, the 276-residue chain is Diaminopimelate epimerase (276 aa).

3 residues coordinate substrate: N13, Q46, and N66. C75 acts as the Proton donor in catalysis. Substrate contacts are provided by residues 76 to 77 (GN), N159, N192, and 210 to 211 (ER). The active-site Proton acceptor is C219. 220–221 (GT) lines the substrate pocket.

The protein belongs to the diaminopimelate epimerase family. In terms of assembly, homodimer.

Its subcellular location is the cytoplasm. The catalysed reaction is (2S,6S)-2,6-diaminopimelate = meso-2,6-diaminopimelate. Its pathway is amino-acid biosynthesis; L-lysine biosynthesis via DAP pathway; DL-2,6-diaminopimelate from LL-2,6-diaminopimelate: step 1/1. Functionally, catalyzes the stereoinversion of LL-2,6-diaminopimelate (L,L-DAP) to meso-diaminopimelate (meso-DAP), a precursor of L-lysine and an essential component of the bacterial peptidoglycan. This Tolumonas auensis (strain DSM 9187 / NBRC 110442 / TA 4) protein is Diaminopimelate epimerase.